Consider the following 92-residue polypeptide: Elongation factor 1-beta (92 aa).

The protein belongs to the EF-1-beta/EF-1-delta family.

In terms of biological role, promotes the exchange of GDP for GTP in EF-1-alpha/GDP, thus allowing the regeneration of EF-1-alpha/GTP that could then be used to form the ternary complex EF-1-alpha/GTP/AAtRNA. This chain is Elongation factor 1-beta, found in Pyrobaculum calidifontis (strain DSM 21063 / JCM 11548 / VA1).